The chain runs to 231 residues: 7-cyano-7-deazaguanine synthase (231 aa).

8–18 contributes to the ATP binding site; sequence FSGGQDSTTCL. Zn(2+) contacts are provided by Cys188, Cys197, Cys200, and Cys203.

Belongs to the QueC family. Requires Zn(2+) as cofactor.

The catalysed reaction is 7-carboxy-7-deazaguanine + NH4(+) + ATP = 7-cyano-7-deazaguanine + ADP + phosphate + H2O + H(+). Its pathway is purine metabolism; 7-cyano-7-deazaguanine biosynthesis. In terms of biological role, catalyzes the ATP-dependent conversion of 7-carboxy-7-deazaguanine (CDG) to 7-cyano-7-deazaguanine (preQ(0)). In Salmonella gallinarum (strain 287/91 / NCTC 13346), this protein is 7-cyano-7-deazaguanine synthase.